A 1506-amino-acid polypeptide reads, in one-letter code: Transcriptional repressor NF-X1 homolog (1506 aa).

The span at 1–12 (MEESQNIPPKTQ) shows a compositional bias: polar residues. Disordered stretches follow at residues 1 to 123 (MEES…NNQL), 142 to 164 (LKSESAKQQQQQQQQSLPTQEPT), and 181 to 282 (KAFV…KKDI). 2 stretches are compositionally biased toward low complexity: residues 13–103 (TLNN…SNSN) and 110–121 (HNNNYNNNNNNN). Positions 194-209 (NNTNNNNNNNNNNNNN) are enriched in low complexity. Residues 217–232 (DNNRPQRERRERKPKE) show a composition bias toward basic and acidic residues. Residues 240 to 252 (PQQPQQPQQPQPQ) are compositionally biased toward pro residues. The segment covering 253 to 263 (PQQQQQSQQQQ) has biased composition (low complexity). The span at 267–282 (ENNRKKENKLQSKKDI) shows a compositional bias: basic and acidic residues. A PHD-type zinc finger spans residues 363–416 (IYECMVCFENVGKNAVIWSCSQCFTMFHSSCIKQWSSKSVTTEGKWKCPGCRYN). An RING-type; degenerate zinc finger spans residues 366 to 414 (CMVCFENVGKNAVIWSCSQCFTMFHSSCIKQWSSKSVTTEGKWKCPGCR). 7 NF-X1-type zinc fingers span residues 460–478 (CPHSCTMLCHPGPCLNCSS), 515–534 (CGNHRCQQQCHSGSCSPCEV), 581–600 (CGNHKCQRTCHKGDCEPCSL), 642–661 (CKQHSCTDRCHTGPCGSCKV), 739–758 (CGVHKCQQLCHSGKCYNCYI), 796–817 (CGHSNEVWEHKCHSGPCPPCTY), and 852–868 (CLSHTCPRICHSGPCLI). 2 disordered regions span residues 897–1012 (QQSK…VDLN) and 1021–1040 (NEEEERIKKEEKEDDEDEDE). Low complexity predominate over residues 903–921 (TTTTTTTTTTSTTSTTSPK). Residues 925–934 (KDEELIEDDN) show a composition bias toward acidic residues. Positions 935-980 (NNNNNNNNNNNNNNNNNNNNNNNNNNNNNNNNNNNNNNNNNNNNNN) are enriched in low complexity. Basic and acidic residues-rich tracts occupy residues 981 to 1002 (EKAEITNECNHDHDHEHEHSDD) and 1021 to 1031 (NEEEERIKKEE). Residues 1062–1084 (CEHTCHQACHPGEPCPTNISCKQ) form an NF-X1-type 8 zinc finger. Disordered regions lie at residues 1132 to 1167 (SHTLDNNPNNPNNPNNPNNNTTTTTTTTTTTTSSPT) and 1447 to 1473 (NQNQNQNNNNNNNNNNNNNSNINIKPT). Low complexity-rich tracts occupy residues 1137–1167 (NNPNNPNNPNNPNNNTTTTTTTTTTTTSSPT) and 1447–1470 (NQNQNQNNNNNNNNNNNNNSNINI).

It belongs to the NFX1 family.

Its subcellular location is the nucleus. In terms of biological role, may play a role in transcription regulation. The protein is Transcriptional repressor NF-X1 homolog (nfx1) of Dictyostelium discoideum (Social amoeba).